The primary structure comprises 1397 residues: Centlein (1397 aa).

Disordered stretches follow at residues 1 to 43 (MAAR…GLAG) and 56 to 76 (LWRG…GAAV). A2 carries the N-acetylalanine modification. S5, S9, and S22 each carry phosphoserine. Coiled coils occupy residues 95–126 (EEAK…KEFV) and 405–481 (VVNL…KLMA). Disordered stretches follow at residues 422 to 449 (LKEK…SGKA) and 485 to 521 (CDQD…SEEL). The segment covering 485–503 (CDQDFSEKGTEGKHKEPPV) has biased composition (basic and acidic residues). Coiled coils occupy residues 674–778 (KNEK…KALR), 973–1114 (ISLR…MELL), and 1152–1299 (SESN…LKKM). S1219 bears the Phosphoserine mark. T1334 carries the phosphothreonine modification.

As to quaternary structure, interacts with CEP250 and CEP68. Interacts with NEK2; the interaction leads to phosphorylation of CNTLN. Post-translationally, phosphorylated directly or indirectly by NEK2.

It is found in the cytoplasm. The protein resides in the cytoskeleton. It localises to the microtubule organizing center. The protein localises to the centrosome. Its subcellular location is the centriole. Functionally, required for centrosome cohesion and recruitment of CEP68 to centrosomes. The sequence is that of Centlein from Mus musculus (Mouse).